Consider the following 1006-residue polypeptide: Probable beta-galactosidase A (1006 aa).

The N-terminal stretch at 1–18 (MKLLSVCAIALLAAQAAG) is a signal peptide. Residues tyrosine 96, asparagine 140, alanine 141, and glutamate 142 each contribute to the substrate site. The N-linked (GlcNAc...) asparagine glycan is linked to asparagine 156. Asparagine 199 contacts substrate. The active-site Proton donor is the glutamate 200. Cysteines 205 and 206 form a disulfide. Tyrosine 260 provides a ligand contact to substrate. A disulfide bridge connects residues cysteine 266 and cysteine 315. The Nucleophile role is filled by glutamate 298. Residue tyrosine 364 participates in substrate binding. 7 N-linked (GlcNAc...) asparagine glycosylation sites follow: asparagine 373, asparagine 402, asparagine 422, asparagine 622, asparagine 760, asparagine 777, and asparagine 914.

Belongs to the glycosyl hydrolase 35 family.

The protein localises to the secreted. It carries out the reaction Hydrolysis of terminal non-reducing beta-D-galactose residues in beta-D-galactosides.. Cleaves beta-linked terminal galactosyl residues from gangliosides, glycoproteins, and glycosaminoglycans. In Aspergillus fumigatus (strain CBS 144.89 / FGSC A1163 / CEA10) (Neosartorya fumigata), this protein is Probable beta-galactosidase A (lacA).